Consider the following 158-residue polypeptide: Endoribonuclease YbeY (158 aa).

His119, His123, and His129 together coordinate Zn(2+).

It belongs to the endoribonuclease YbeY family. Requires Zn(2+) as cofactor.

The protein resides in the cytoplasm. Its function is as follows. Single strand-specific metallo-endoribonuclease involved in late-stage 70S ribosome quality control and in maturation of the 3' terminus of the 16S rRNA. The polypeptide is Endoribonuclease YbeY (Shewanella sediminis (strain HAW-EB3)).